The sequence spans 757 residues: Polyribonucleotide nucleotidyltransferase (757 aa).

Residues Asp-482 and Asp-488 each coordinate Mg(2+). In terms of domain architecture, KH spans 549 to 608; sequence PRMLSFYIDKDKISAAIGSKGKNIRSVCERSNAKIEIGDDGKVSVFATSGTEAEIAKSMM. The S1 motif domain occupies 618–686; that stretch reads GSIVDVKVVR…KGGCPKLSRR (69 aa). The segment covering 703 to 714 has biased composition (basic and acidic residues); it reads EERKDGPNDRDN. The disordered stretch occupies residues 703–757; the sequence is EERKDGPNDRDNYYNNSFSRKPGGSHHKRPPRPRSGFSNRNRPKFGNNDSSSGFY. Residues 725–734 show a composition bias toward basic residues; it reads GGSHHKRPPR.

Belongs to the polyribonucleotide nucleotidyltransferase family. Mg(2+) is required as a cofactor.

It is found in the cytoplasm. The enzyme catalyses RNA(n+1) + phosphate = RNA(n) + a ribonucleoside 5'-diphosphate. In terms of biological role, involved in mRNA degradation. Catalyzes the phosphorolysis of single-stranded polyribonucleotides processively in the 3'- to 5'-direction. This is Polyribonucleotide nucleotidyltransferase from Wolbachia sp. subsp. Drosophila simulans (strain wRi).